The sequence spans 479 residues: MNFETIIGLEVHVELNTNSKIFSPSSAHFGEDPNANTNVIDWSFPGVLPVMNKGVIDAGIKAALALNMDIHKEMHFDRKNYFYPDNPKAYQISQFDEPIGYNGWIEIKLEDGSTKKIRIERAHLEEDAGKNTHGTDGYSYVDLNRQGVPLIEIVSEADMRSPEEAYTYLTALKEIIQYTGISDVKMEEGSMRVDANISLRPYGQEQFGTKTELKNLNSFSNVRKGLEFEVERQAKLLRSGGVIRQETRRYDEANKGTILMRVKEGAADYRYFPEPDLPLYEIDDAWIDEMRAQLPQFPAQRRAKYEEELGLSAYDASQLTATKALSDFFETAVSLGGDAKQVSNWLQGEVAQFLNAEGKTIEEIRLTPDNLVEMIAIIADGTISSKMAKKVFVHLAKNGGSARAYVEKAGLVQISDPAVLVPIIHQVFADNEAAVADFKSGKRNADKAFTGFLMKATKGQANPQVAQQLLAQELQKLRD.

Belongs to the GatB/GatE family. GatB subfamily. Heterotrimer of A, B and C subunits.

It catalyses the reaction L-glutamyl-tRNA(Gln) + L-glutamine + ATP + H2O = L-glutaminyl-tRNA(Gln) + L-glutamate + ADP + phosphate + H(+). The enzyme catalyses L-aspartyl-tRNA(Asn) + L-glutamine + ATP + H2O = L-asparaginyl-tRNA(Asn) + L-glutamate + ADP + phosphate + 2 H(+). Functionally, allows the formation of correctly charged Asn-tRNA(Asn) or Gln-tRNA(Gln) through the transamidation of misacylated Asp-tRNA(Asn) or Glu-tRNA(Gln) in organisms which lack either or both of asparaginyl-tRNA or glutaminyl-tRNA synthetases. The reaction takes place in the presence of glutamine and ATP through an activated phospho-Asp-tRNA(Asn) or phospho-Glu-tRNA(Gln). The polypeptide is Aspartyl/glutamyl-tRNA(Asn/Gln) amidotransferase subunit B (Streptococcus pyogenes serotype M5 (strain Manfredo)).